Here is a 230-residue protein sequence, read N- to C-terminus: Demethylluteothin O-methyltransferase (230 aa).

This sequence belongs to the methyltransferase superfamily.

It carries out the reaction demethylluteothin + S-adenosyl-L-methionine = luteothin + S-adenosyl-L-homocysteine. Its pathway is antibiotic biosynthesis. The protein operates within polyketide biosynthesis. Its function is as follows. Methyltransferase involved in the biosynthesis of the antibiotic aureothin, a nitroaryl polyketide metabolite with antifungal, cytotoxic and insecticidal activities. Catalyzes the methylation of demethylluteothin to luteothin (also called deoxyaureothin). Is specific for its gamma-pyrone substrate, and does not act on the alpha-pyrone isomer. The protein is Demethylluteothin O-methyltransferase of Streptomyces thioluteus.